The sequence spans 195 residues: Imidazoleglycerol-phosphate dehydratase (195 aa).

The protein belongs to the imidazoleglycerol-phosphate dehydratase family.

It localises to the cytoplasm. The catalysed reaction is D-erythro-1-(imidazol-4-yl)glycerol 3-phosphate = 3-(imidazol-4-yl)-2-oxopropyl phosphate + H2O. The protein operates within amino-acid biosynthesis; L-histidine biosynthesis; L-histidine from 5-phospho-alpha-D-ribose 1-diphosphate: step 6/9. This is Imidazoleglycerol-phosphate dehydratase from Cupriavidus pinatubonensis (strain JMP 134 / LMG 1197) (Cupriavidus necator (strain JMP 134)).